The sequence spans 501 residues: MQPGIPKYTPSAIQLAPVVTGKFGERPQPKRLTREAMRNYLKERGDQTVLILHAKVAQKSYGNEKRFFCPPPCVYLMGSGWKKKKEQMERDGCSEQESQPCAFIGIGNSEQEMQQLNLEGKNYCTAKTLYISDSDKRKHFMLSVKMFYGNSDDIGVFLSKRIKVISKPSKKKQSLKNADLCIASGTKVALFNRLRSQTVSTRYLHVEGGNFHASSQQWGAFYIHLLDDEESEGEEFTVRDGYIHYGQTVKLVCSVTGMALPRLIIRKVDKQTALLDADDPVSQLHKCAFYLKDTERMYLCLSQERIIQFQATPCPKEPNKEMINDGASWTIISTDKAEYTFYEGMGPINAPVTPVPVVESLQLNGGGDVAMLELTGQNFTPNLRVWFGDVEAETMYRCAESMLCVVPDISAFREGWRWVRQPVQVPVTLVRNDGVIYSTSLTFTYTPEPGPRPHCSAAGAILRANSSLLASNEPNTNSEGSYTNISTNSANVTSSTAAVVS.

DNA-binding regions lie at residues 58–68 (QKSYGNEKRFF), 166–171 (SKPSKK), and 193–198 (RLRSQT). The IPT/TIG domain occupies 356-446 (PVVESLQLNG…YSTSLTFTYT (91 aa)).

The protein belongs to the Su(H) family. Interacts with activated Notch proteins. Forms a ternary complex with nrarp and the intracellular domain (NICD) of notch1. Interacts with rita1, leading to nuclear export, prevent the interaction between rbpj and NICD product and subsequent down-regulation of the Notch signaling pathway.

The protein localises to the nucleus. It is found in the cytoplasm. Transcriptional regulator that plays a central role in Notch signaling, a signaling pathway involved in cell-cell communication that regulates a broad spectrum of cell-fate determinations. Acts as a transcriptional repressor when it is not associated with Notch proteins. When associated with some NICD product of Notch proteins (Notch intracellular domain), it acts as a transcriptional activator that activates transcription of Notch target genes. Required for the transcriptional activation of ESR1, suggesting that it is required during primary neurogenesis in embryos. Binds to the oxygen responsive element of COX4I2 and activates its transcription under hypoxia conditions (4% oxygen). This is Suppressor of hairless protein homolog (rbpj) from Xenopus laevis (African clawed frog).